An 88-amino-acid chain; its full sequence is Large ribosomal subunit protein bL27 (88 aa).

The disordered stretch occupies residues 1–26 (MAHKKGASSSSNGRDSEAKRLGVKRF).

The protein belongs to the bacterial ribosomal protein bL27 family.

The polypeptide is Large ribosomal subunit protein bL27 (Corynebacterium glutamicum (strain R)).